We begin with the raw amino-acid sequence, 424 residues long: Serpin E3 (424 aa).

The signal sequence occupies residues 1 to 20; the sequence is MPPFLITLFLFHSCCLRANG. N-linked (GlcNAc...) asparagine glycosylation is present at asparagine 46. A disordered region spans residues 143-174; sequence DLSEPNSTAIQTSEGASRETAGGGPSEGPGGW. The span at 146 to 157 shows a compositional bias: polar residues; it reads EPNSTAIQTSEG. Residues 163 to 173 show a composition bias toward gly residues; sequence AGGGPSEGPGG.

Belongs to the serpin family.

The protein resides in the secreted. Its function is as follows. Probable serine protease inhibitor. In Homo sapiens (Human), this protein is Serpin E3 (SERPINE3).